A 326-amino-acid polypeptide reads, in one-letter code: D-allose transport system permease protein AlsC (326 aa).

Topologically, residues 1–18 (MGFTTRVKSEASEKKPFN) are cytoplasmic. Residues 19-39 (FALFWDKYGTFFILAIIVAIF) form a helical membrane-spanning segment. Residues 40-70 (GSLSPEYFLTTNNITQIFVQSSVTVLIGMGE) are Periplasmic-facing. Residues 71 to 91 (FFAILVAGIDLSVGAILALSG) traverse the membrane as a helical segment. Residues 92 to 101 (MVTAKLMLAG) lie on the Cytoplasmic side of the membrane. Residues 102–122 (VDPFLAAMIGGVLVGGALGAI) traverse the membrane as a helical segment. The Periplasmic portion of the chain corresponds to 123-124 (NG). A helical membrane pass occupies residues 125-145 (CLVNWTGLHPFIITLGTNAIF). The Cytoplasmic segment spans residues 146–149 (RGIT). Residues 150–170 (LVISDANSVYGFSFDFVNFFA) form a helical membrane-spanning segment. Topologically, residues 171 to 172 (AS) are periplasmic. Residues 173–193 (VIGIPVPVIFSLIVALILWFL) traverse the membrane as a helical segment. The Cytoplasmic segment spans residues 194–221 (TTRMRLGRNIYALGGNKNSAFYSGIDVK). The helical transmembrane segment at 222-242 (FHILVVFIISGVCAGLAGVVS) threads the bilayer. Topologically, residues 243-252 (TARLGAAEPL) are periplasmic. The helical transmembrane segment at 253-273 (AGMGFETYAIASAIIGGTSFF) threads the bilayer. Topologically, residues 274–278 (GGKGR) are cytoplasmic. The next 2 membrane-spanning stretches (helical) occupy residues 279–299 (IFSVVIGGLIIGTINNGLNIL) and 300–320 (QVQTYYQLVVMGGLIIAAVAL). Topologically, residues 321 to 326 (DRLISK) are cytoplasmic.

This sequence belongs to the binding-protein-dependent transport system permease family. AraH/RbsC subfamily.

It localises to the cell inner membrane. Functionally, part of the binding-protein-dependent transport system AlsBAC for D-allose; probably responsible for the translocation of the substrate across the membrane. The polypeptide is D-allose transport system permease protein AlsC (alsC) (Escherichia coli (strain K12)).